Here is a 570-residue protein sequence, read N- to C-terminus: T-cell surface protein tactile (570 aa).

Residues 1 to 21 (MEKKWTYCAVYSIIQMHLVRG) form the signal peptide. Topologically, residues 22–504 (IVEETFGAEE…TVISKPKDGM (483 aa)) are extracellular. Residues 38 to 125 (GSDVNLTCQT…YECSFTLYPE (88 aa)) enclose the Ig-like V-type 1 domain. 12 N-linked (GlcNAc...) asparagine glycosylation sites follow: Asn-42, Asn-107, Asn-148, Asn-156, Asn-166, Asn-184, Asn-261, Asn-284, Asn-334, Asn-352, Asn-374, and Asn-431. Cys-45 and Cys-118 are oxidised to a cystine. Residues 156–222 (NGTLEIPCFQ…YRLYLSPVQI (67 aa)) form the Ig-like V-type 2 domain. Cysteines 163 and 231 form a disulfide. Residues 253-359 (PEIPMIVENN…VWNSSSEKIT (107 aa)) form the Ig-like C2-type domain. Cys-274 and Cys-339 form a disulfide bridge. Residues 373 to 403 (LNATESTLGTRPSLANSISPTGYRTPSSTAH) are disordered. Residues 441–486 (AKHSAPWMPSETNSSPSSGAGSTLPGDIFTSTTRASSEVPTTANVS) are disordered. 2 stretches are compositionally biased toward polar residues: residues 450–461 (SETNSSPSSGAG) and 469–486 (FTSTTRASSEVPTTANVS). The N-linked (GlcNAc...) asparagine glycan is linked to Asn-484. The chain crosses the membrane as a helical span at residues 505 to 525 (SWPVIVAALLLSCFVLFGLGV). Topologically, residues 526-570 (RKWCQYQKEIMQRPPPFKPPPPPIKYTCIQESIGSDLPCHELETL) are cytoplasmic.

In terms of assembly, homodimer; disulfide-linked. Interacts with PVR.

Its subcellular location is the membrane. In terms of biological role, may be involved in adhesive interactions of activated T and NK cells during the late phase of the immune response. Promotes NK cell-target adhesion by interacting with PVR present on target cells. May function at a time after T and NK cells have penetrated the endothelium using integrins and selectins, when they are actively engaging diseased cells and moving within areas of inflammation. This is T-cell surface protein tactile (CD96) from Bos taurus (Bovine).